The sequence spans 261 residues: Cytochrome c oxidase subunit 3 (261 aa).

At 1–15 (MTHQTHAYHMVNPSP) the chain is on the mitochondrial matrix side. Residues 16–34 (WPLTGALSALLMTSGLAMW) form a helical membrane-spanning segment. The Mitochondrial intermembrane portion of the chain corresponds to 35–40 (FHYNLT). A helical transmembrane segment spans residues 41–66 (LLLTLGMTTNLLTMYQWWRDIIREST). The Mitochondrial matrix portion of the chain corresponds to 67 to 72 (FQGHHT). Residues 73–105 (PIVQKGLRYGMILFIISEVFFFAGFFWAFYHSS) traverse the membrane as a helical segment. Topologically, residues 106–128 (LAPTPELGGCWPPTGIIPLNPLE) are mitochondrial intermembrane. Residues 129–152 (VPLLNTSVLLASGVSITWAHHSLM) traverse the membrane as a helical segment. Over 153 to 155 (EGN) the chain is Mitochondrial matrix. A helical transmembrane segment spans residues 156-183 (RKHMLQALFITISLGVYFTLLQASEYYE). The Mitochondrial intermembrane segment spans residues 184–190 (TSFTISD). The chain crosses the membrane as a helical span at residues 191 to 223 (GVYGSTFFMATGFHGLHVIIGSTFLIVCFLRQL). The Mitochondrial matrix segment spans residues 224-232 (KYHFTSNHH). The chain crosses the membrane as a helical span at residues 233–256 (FGFEAAAWYWHFVDVVWLFLYVSI). Topologically, residues 257 to 261 (YWWGS) are mitochondrial intermembrane.

Belongs to the cytochrome c oxidase subunit 3 family. Component of the cytochrome c oxidase (complex IV, CIV), a multisubunit enzyme composed of 14 subunits. The complex is composed of a catalytic core of 3 subunits MT-CO1, MT-CO2 and MT-CO3, encoded in the mitochondrial DNA, and 11 supernumerary subunits COX4I, COX5A, COX5B, COX6A, COX6B, COX6C, COX7A, COX7B, COX7C, COX8 and NDUFA4, which are encoded in the nuclear genome. The complex exists as a monomer or a dimer and forms supercomplexes (SCs) in the inner mitochondrial membrane with NADH-ubiquinone oxidoreductase (complex I, CI) and ubiquinol-cytochrome c oxidoreductase (cytochrome b-c1 complex, complex III, CIII), resulting in different assemblies (supercomplex SCI(1)III(2)IV(1) and megacomplex MCI(2)III(2)IV(2)).

Its subcellular location is the mitochondrion inner membrane. The catalysed reaction is 4 Fe(II)-[cytochrome c] + O2 + 8 H(+)(in) = 4 Fe(III)-[cytochrome c] + 2 H2O + 4 H(+)(out). Its function is as follows. Component of the cytochrome c oxidase, the last enzyme in the mitochondrial electron transport chain which drives oxidative phosphorylation. The respiratory chain contains 3 multisubunit complexes succinate dehydrogenase (complex II, CII), ubiquinol-cytochrome c oxidoreductase (cytochrome b-c1 complex, complex III, CIII) and cytochrome c oxidase (complex IV, CIV), that cooperate to transfer electrons derived from NADH and succinate to molecular oxygen, creating an electrochemical gradient over the inner membrane that drives transmembrane transport and the ATP synthase. Cytochrome c oxidase is the component of the respiratory chain that catalyzes the reduction of oxygen to water. Electrons originating from reduced cytochrome c in the intermembrane space (IMS) are transferred via the dinuclear copper A center (CU(A)) of subunit 2 and heme A of subunit 1 to the active site in subunit 1, a binuclear center (BNC) formed by heme A3 and copper B (CU(B)). The BNC reduces molecular oxygen to 2 water molecules using 4 electrons from cytochrome c in the IMS and 4 protons from the mitochondrial matrix. The chain is Cytochrome c oxidase subunit 3 (MT-CO3) from Felis catus (Cat).